The primary structure comprises 227 residues: MGQKVHPKGFRIGIIRDWDSNWYADRDYSELLHEDVKLRKFIKDRFYAAGISKVEIQRTGNRIRVTIHTAKPGIIIGRGGIEVERLKVNLAEMTKKNVNINIQEIRRPEMDAQIVAENVAQQLEKRISFRRAMKQTVGRTMRSGGIGIKIAISGRLGGAEIARTEWYAEGKVPLHTLRADIDYGFAEANTTYGKIGIKVWINRGEILPEAKQRPKEPKQKEMEEAGR.

The region spanning 38–106 is the KH type-2 domain; sequence LRKFIKDRFY…NVNINIQEIR (69 aa).

The protein belongs to the universal ribosomal protein uS3 family. In terms of assembly, part of the 30S ribosomal subunit. Forms a tight complex with proteins S10 and S14.

Binds the lower part of the 30S subunit head. Binds mRNA in the 70S ribosome, positioning it for translation. In Syntrophomonas wolfei subsp. wolfei (strain DSM 2245B / Goettingen), this protein is Small ribosomal subunit protein uS3.